A 484-amino-acid polypeptide reads, in one-letter code: Tribbles (484 aa).

Over residues 1–23 the composition is skewed to polar residues; sequence MDNSSGQNSRTASSASTSKIVNY. The disordered stretch occupies residues 1-51; sequence MDNSSGQNSRTASSASTSKIVNYSSPVSPGVAAATSSSSSSSSSGMSSSQE. Low complexity predominate over residues 24–49; it reads SSPVSPGVAAATSSSSSSSSSGMSSS. The region spanning 129–397 is the Protein kinase domain; the sequence is YRHLVDLTAS…ASHIFLTPWL (269 aa). Composition is skewed to acidic residues over residues 420-437 and 475-484; these read AEED…DEEG and PEPDTDVDMG. 2 disordered regions span residues 420 to 443 and 464 to 484; these read AEED…PLGD and MAQN…VDMG.

This sequence belongs to the protein kinase superfamily. CAMK Ser/Thr protein kinase family. Tribbles subfamily. Interacts with slbo. Interacts with Akt1. As to expression, expressed throughout the brain with highest levels of expression detected in the cell body rind and lower levels of expression detected in the neurophil (at protein level).

It is found in the nucleus. The protein localises to the cytoplasm. The protein resides in the cell cortex. In terms of biological role, adapter protein that negatively regulates different signaling pathways to coordinate cell differentiation, proliferation, migration and growth. Functions by binding to key regulatory proteins and either blocks their activity or regulates their turnover by the proteasome. In various developing tissues functions as a cell cycle regulator that mediates cell proliferation according to the requirements of the developmental program. Acts by inducing the proteasomal degradation of the CD25 mitotic activators stg and twe at critical stages of development to delay entry into mitosis and thus mediate cell proliferation. During gastrulation, negatively regulates stg to delay mitosis in the ventral region of the embryonic mesoderm thus allowing invagination to be completed before cell division takes place. Delaying stg-dependent mitosis during bristle development and in migrating germline pole cells also arrests their cell divisions, whereas in cystocytes it promotes their cell divisions. Involved in the regulation of the mid-blastula transition; promotes the destruction of twe resulting in the cell cycle arrest in G2 of cycle 14 which delays mitosis and thus reduces cell proliferation allowing cell fate specification and morphogenesis to take place. In germline cells, blocks border cell migration during oogenesis by binding to slbo/C/EBP and promoting its ubiquitination and degradation by the proteasome. May function in a negative feedback loop with slbo to coordinate proper border cell migration. During tissue growth negatively regulates insulin signaling by binding to Akt1 and blocking its phosphorylation-dependent activation. However it may also function downstream in the insulin signaling pathway, acting with Akt1 to direct foxo degradation. Essential for the proper formation of operant place and aversive olfactory memories. The sequence is that of Tribbles from Drosophila melanogaster (Fruit fly).